Here is a 448-residue protein sequence, read N- to C-terminus: Adenylyltransferase and sulfurtransferase UBA4 (448 aa).

ATP-binding positions include G88, D109, 116–120 (SNLHR), K133, and 177–178 (DT). Positions 219 and 222 each coordinate Zn(2+). The Glycyl thioester intermediate; for adenylyltransferase activity role is filled by C236. Residues C297 and C300 each coordinate Zn(2+). In terms of domain architecture, Rhodanese spans 349-446 (QGENSILIDV…WSKEIDSKIP (98 aa)). The active-site Cysteine persulfide intermediate; for sulfurtransferase activity is C405.

In the N-terminal section; belongs to the HesA/MoeB/ThiF family. UBA4 subfamily. Zn(2+) serves as cofactor.

The protein localises to the cytoplasm. The protein resides in the cytosol. Its pathway is tRNA modification; 5-methoxycarbonylmethyl-2-thiouridine-tRNA biosynthesis. Functionally, plays a central role in 2-thiolation of mcm(5)S(2)U at tRNA wobble positions of cytosolic tRNA(Lys), tRNA(Glu) and tRNA(Gln). Acts by mediating the C-terminal thiocarboxylation of sulfur carrier URM1. Its N-terminus first activates URM1 as acyl-adenylate (-COAMP), then the persulfide sulfur on the catalytic cysteine is transferred to URM1 to form thiocarboxylation (-COSH) of its C-terminus. The reaction probably involves hydrogen sulfide that is generated from the persulfide intermediate and that acts as a nucleophile towards URM1. Subsequently, a transient disulfide bond is formed. Does not use thiosulfate as sulfur donor; NFS1 probably acting as a sulfur donor for thiocarboxylation reactions. Prior mcm(5) tRNA modification by the elongator complex is required for 2-thiolation. May also be involved in protein urmylation. This chain is Adenylyltransferase and sulfurtransferase UBA4, found in Debaryomyces hansenii (strain ATCC 36239 / CBS 767 / BCRC 21394 / JCM 1990 / NBRC 0083 / IGC 2968) (Yeast).